We begin with the raw amino-acid sequence, 166 residues long: MRLILLSGLLLLGTFLVNGHDADPEGEVLNSVLLTLMKLQKEFTNLFHAFLTVHKARSFGSGSERLYVSNKEIKNFEALKVICKQAGGQIPSPQLENQNKAFANVLERHNKEAFLVVGDSGNFTNWAAGQPNKADGTCVKADKQGFCHSTSCDDNLLVVCEFYFIL.

Positions 1–19 are cleaved as a signal peptide; sequence MRLILLSGLLLLGTFLVNG. Residues 46 to 161 form the C-type lectin domain; sequence LFHAFLTVHK…CDDNLLVVCE (116 aa). Disulfide bonds link cysteine 83-cysteine 160 and cysteine 138-cysteine 152. Asparagine 122 is a glycosylation site (N-linked (GlcNAc...) asparagine).

Belongs to the alpha-type phospholipase A2 inhibitor family. In terms of assembly, homotrimer; non-covalently linked. As to expression, expressed by the liver.

The protein localises to the secreted. This phospholipase A2 inhibitor binds directly phospholipase A2 in the presence or absence of calcium. The protein is Phospholipase A2 inhibitor B1 of Crotalus durissus terrificus (South American rattlesnake).